We begin with the raw amino-acid sequence, 404 residues long: Cystinosin homolog (404 aa).

Topologically, residues 20–123 (TNNLVVRQKE…FARITVIRSH (104 aa)) are lumenal. Residues Asn46, Asn53, Asn79, and Asn97 are each glycosylated (N-linked (GlcNAc...) asparagine). A helical membrane pass occupies residues 124 to 144 (FLAILIQIVGWTYFFAWSISF). The region spanning 125 to 191 (LAILIQIVGW…MYYNSHVKNE (67 aa)) is the PQ-loop 1 domain. Over 145–163 (YPQMYLNFKRKSVVGLNFD) the chain is Cytoplasmic. A helical transmembrane segment spans residues 164 to 184 (FLSLNLVGFCAYAIFNLLMYY). The Lumenal segment spans residues 185–207 (NSHVKNEYNIVNPRSPPPVLLND). The chain crosses the membrane as a helical span at residues 208–228 (VVFAVHAFLACFITILQCLFY). Residues 229-238 (ERDNQSVSSK) lie on the Cytoplasmic side of the membrane. A helical transmembrane segment spans residues 239 to 259 (CIALMIVLISFGFCSAAATVL). The Lumenal portion of the chain corresponds to 260–263 (RKIQ). Residues 264-285 (LLSFVTSLSYIKMAVTCCKYFP) traverse the membrane as a helical segment. The PQ-loop 2 domain maps to 266 to 327 (SFVTSLSYIK…MILQAVNVND (62 aa)). At 286–295 (QAYFNYTRKS) the chain is on the cytoplasmic side. Residues 296 to 316 (TVGWSIGNIMLDFTGGTLDIL) form a helical membrane-spanning segment. The Lumenal portion of the chain corresponds to 317-337 (QMILQAVNVNDWSAFYANPVK). A helical membrane pass occupies residues 338-358 (FGLGFVSIFFDIIFMVQHYVL). Residues 359-404 (YPNAEVPHNEYHGVDNPNPDNIARDAEQYAGDSESMESTEPIIVHD) lie on the Cytoplasmic side of the membrane.

Belongs to the cystinosin family.

Its subcellular location is the lysosome membrane. It is found in the cytoplasmic vesicle. The protein resides in the phagosome. It carries out the reaction L-cystine(out) + H(+)(out) = L-cystine(in) + H(+)(in). Its function is as follows. Cystine/H(+) symporter that mediates export of cystine, the oxidized dimer of cysteine, from lysosomes. May play a role in the degradation of engulfed apoptotic cells. In Caenorhabditis elegans, this protein is Cystinosin homolog (ctns-1).